Reading from the N-terminus, the 269-residue chain is 4-hydroxy-tetrahydrodipicolinate reductase (269 aa).

NAD(+) is bound by residues 8–13 (GAGGRM) and Glu-34. Arg-35 contacts NADP(+). NAD(+) is bound by residues 98-100 (GTT) and 122-125 (ASNY). His-155 acts as the Proton donor/acceptor in catalysis. His-156 contributes to the (S)-2,3,4,5-tetrahydrodipicolinate binding site. The active-site Proton donor is Lys-159. Position 165–166 (165–166 (GT)) interacts with (S)-2,3,4,5-tetrahydrodipicolinate.

This sequence belongs to the DapB family.

It is found in the cytoplasm. It catalyses the reaction (S)-2,3,4,5-tetrahydrodipicolinate + NAD(+) + H2O = (2S,4S)-4-hydroxy-2,3,4,5-tetrahydrodipicolinate + NADH + H(+). The enzyme catalyses (S)-2,3,4,5-tetrahydrodipicolinate + NADP(+) + H2O = (2S,4S)-4-hydroxy-2,3,4,5-tetrahydrodipicolinate + NADPH + H(+). It functions in the pathway amino-acid biosynthesis; L-lysine biosynthesis via DAP pathway; (S)-tetrahydrodipicolinate from L-aspartate: step 4/4. Catalyzes the conversion of 4-hydroxy-tetrahydrodipicolinate (HTPA) to tetrahydrodipicolinate. The chain is 4-hydroxy-tetrahydrodipicolinate reductase from Haemophilus ducreyi (strain 35000HP / ATCC 700724).